Consider the following 660-residue polypeptide: MKTVVFAYHDMGCLGIEALLAAGYEISAIFTHTDNPGEKAFYGSVAHLAAERGIPVYAPDNVNHPLWVERIAQLSPEVIFSFYYRHLICDEILQLAPAGAFNLHGSLLPKYRGRAPLNWVLVNGETETGVTLHRMVKRADAGAIVAQLRVAIAPDDIAITLHHKLCHAARQLLEQTLPAIKHGNILEIAQRENEATCFGRRTPDDSFLEWHKPASVLHNMVRAVADPWPGAFSYVGNQKFTVWSSRVHPHASKAQPGSVISIAPLLIACGDGALEIVTGQAGDGITMQGSQLAQTLGLVQGSRLNSQPACTARRRTRVLILGVNGFIGNHLTERLLREDHYEVYGLDIGSDAISRFLNHPHFHFVEGDISIHSEWIEYHVKKCDVVLPLVAIATPIEYTRNPLRVFELDFEENLRIIRYCVKYRKRIIFPSTSEVYGMCSDKYFDEDHSNLIVGPVNKPRWIYSVSKQLLDRVIWAYGEKEGLQFTLFRPFNWMGPRLDNLNAARIGSSRAITQLILNLVEGSPIKLIDGGKQKRCFTDIRDGIEALYRIIENAGNRCDGEIINIGNPENEASIEELGEMLLASFEKHPLRHHFPPFAGFRVVESSSYYGKGYQDVEHRKPSIRNAHRCLDWEPKIDMQETIDETLDFFLRTVDLTDKPS.

The interval Met1–Leu304 is formyltransferase ArnAFT. His86 to Ile88 is a binding site for (6R)-10-formyltetrahydrofolate. Residue His104 is the Proton donor; for formyltransferase activity of the active site. Residues Arg114 and Val136–Asp140 each bind (6R)-10-formyltetrahydrofolate. A dehydrogenase ArnADH region spans residues Arg314–Ser660. NAD(+)-binding positions include Asp347 and Asp368–Ile369. UDP-alpha-D-glucuronate contacts are provided by residues Ala393, Tyr398, and Thr432–Ser433. The active-site Proton acceptor; for decarboxylase activity is the Glu434. UDP-alpha-D-glucuronate is bound by residues Arg460, Asn492, Lys526–Arg535, and Tyr613. Arg619 acts as the Proton donor; for decarboxylase activity in catalysis.

The protein in the N-terminal section; belongs to the Fmt family. UDP-L-Ara4N formyltransferase subfamily. It in the C-terminal section; belongs to the NAD(P)-dependent epimerase/dehydratase family. UDP-glucuronic acid decarboxylase subfamily. Homohexamer, formed by a dimer of trimers.

The catalysed reaction is UDP-alpha-D-glucuronate + NAD(+) = UDP-beta-L-threo-pentopyranos-4-ulose + CO2 + NADH. It catalyses the reaction UDP-4-amino-4-deoxy-beta-L-arabinose + (6R)-10-formyltetrahydrofolate = UDP-4-deoxy-4-formamido-beta-L-arabinose + (6S)-5,6,7,8-tetrahydrofolate + H(+). The protein operates within nucleotide-sugar biosynthesis; UDP-4-deoxy-4-formamido-beta-L-arabinose biosynthesis; UDP-4-deoxy-4-formamido-beta-L-arabinose from UDP-alpha-D-glucuronate: step 1/3. It functions in the pathway nucleotide-sugar biosynthesis; UDP-4-deoxy-4-formamido-beta-L-arabinose biosynthesis; UDP-4-deoxy-4-formamido-beta-L-arabinose from UDP-alpha-D-glucuronate: step 3/3. Its pathway is bacterial outer membrane biogenesis; lipopolysaccharide biosynthesis. Its function is as follows. Bifunctional enzyme that catalyzes the oxidative decarboxylation of UDP-glucuronic acid (UDP-GlcUA) to UDP-4-keto-arabinose (UDP-Ara4O) and the addition of a formyl group to UDP-4-amino-4-deoxy-L-arabinose (UDP-L-Ara4N) to form UDP-L-4-formamido-arabinose (UDP-L-Ara4FN). The modified arabinose is attached to lipid A and is required for resistance to polymyxin and cationic antimicrobial peptides. This is Bifunctional polymyxin resistance protein ArnA from Escherichia coli O9:H4 (strain HS).